The sequence spans 396 residues: Bone morphogenetic protein 2 (396 aa).

A signal peptide spans 1 to 23 (MVAGTRCLLALLLPQVLLGGAAG). Residues 24 to 282 (LIPELGRRKF…GHPLHRREKR (259 aa)) constitute a propeptide, cleaved by PCSK5. Ser-87 carries the phosphoserine modification. Asn-135, Asn-163, Asn-164, and Asn-200 each carry an N-linked (GlcNAc...) asparagine glycan. The disordered stretch occupies residues 272-293 (KGHPLHRREKRQAKHKQRKRLK). Residues 274-293 (HPLHRREKRQAKHKQRKRLK) are compositionally biased toward basic residues. Cystine bridges form between Cys-296–Cys-361, Cys-325–Cys-393, and Cys-329–Cys-395. The N-linked (GlcNAc...) asparagine glycan is linked to Asn-338.

It belongs to the TGF-beta family. Homodimer; disulfide-linked. Interacts with SOSTDC1. Interacts with GREM2, RGMA, RGMB and RGMC. Interacts with ASPN. Interacts with MAFP5. Interacts with FBN1 (via N-terminal domain) and FBN2. Interacts with type I receptor BMPR1A. Interacts with type II receptor BMPR2. Interacts with ERFE. Interacts with BMPR1A/ALK3; the interaction may induce HAMP expression. Interacts with TGFBR3.

Its subcellular location is the secreted. Its function is as follows. Growth factor of the TGF-beta superfamily that plays essential roles in many developmental processes, including cardiogenesis, neurogenesis, and osteogenesis. Induces cartilage and bone formation. Initiates the canonical BMP signaling cascade by associating with type I receptor BMPR1A and type II receptor BMPR2. Once all three components are bound together in a complex at the cell surface, BMPR2 phosphorylates and activates BMPR1A. In turn, BMPR1A propagates signal by phosphorylating SMAD1/5/8 that travel to the nucleus and act as activators and repressors of transcription of target genes. Also acts to promote expression of HAMP, via the interaction with its receptor BMPR1A/ALK3. Can also signal through non-canonical pathways such as ERK/MAP kinase signaling cascade that regulates osteoblast differentiation. Also stimulates the differentiation of myoblasts into osteoblasts via the EIF2AK3-EIF2A-ATF4 pathway by stimulating EIF2A phosphorylation which leads to increased expression of ATF4 which plays a central role in osteoblast differentiation. Acts as a positive regulator of odontoblast differentiation during mesenchymal tooth germ formation, expression is repressed during the bell stage by MSX1-mediated inhibition of CTNNB1 signaling. This Dama dama (Fallow deer) protein is Bone morphogenetic protein 2 (BMP2).